Consider the following 208-residue polypeptide: Uracil phosphoribosyltransferase (208 aa).

Residues Arg78, Arg103, and 130–138 contribute to the 5-phospho-alpha-D-ribose 1-diphosphate site; that span reads DPMLATGGT. Residues Ile193 and 198–200 contribute to the uracil site; that span reads GDA. Asp199 is a binding site for 5-phospho-alpha-D-ribose 1-diphosphate.

Belongs to the UPRTase family. It depends on Mg(2+) as a cofactor.

It carries out the reaction UMP + diphosphate = 5-phospho-alpha-D-ribose 1-diphosphate + uracil. The protein operates within pyrimidine metabolism; UMP biosynthesis via salvage pathway; UMP from uracil: step 1/1. Its activity is regulated as follows. Allosterically activated by GTP. In terms of biological role, catalyzes the conversion of uracil and 5-phospho-alpha-D-ribose 1-diphosphate (PRPP) to UMP and diphosphate. This chain is Uracil phosphoribosyltransferase, found in Desulforapulum autotrophicum (strain ATCC 43914 / DSM 3382 / VKM B-1955 / HRM2) (Desulfobacterium autotrophicum).